A 547-amino-acid chain; its full sequence is Chaperonin GroEL 1 (547 aa).

Residues 30–33, Lys51, 87–91, Gly415, and Asp496 contribute to the ATP site; these read TLGP and DGTTT.

This sequence belongs to the chaperonin (HSP60) family. As to quaternary structure, forms a cylinder of 14 subunits composed of two heptameric rings stacked back-to-back. Interacts with the co-chaperonin GroES.

The protein resides in the cytoplasm. The enzyme catalyses ATP + H2O + a folded polypeptide = ADP + phosphate + an unfolded polypeptide.. In terms of biological role, together with its co-chaperonin GroES, plays an essential role in assisting protein folding. The GroEL-GroES system forms a nano-cage that allows encapsulation of the non-native substrate proteins and provides a physical environment optimized to promote and accelerate protein folding. This is Chaperonin GroEL 1 from Bradyrhizobium sp. (strain BTAi1 / ATCC BAA-1182).